The sequence spans 270 residues: ATP synthase subunit a (270 aa).

The next 5 membrane-spanning stretches (helical) occupy residues 37-57 (NVHIDSLFFSVFTGMLFLWVF), 98-118 (IAPLALTIFCWVILMNLMDLV), 143-163 (DVNITMAMALGVFALMIYYSI), 217-237 (VVFILIAAMLPWYLQWVGALP), and 239-259 (AIFHILVILIQAFVFMMLTIV).

It belongs to the ATPase A chain family. In terms of assembly, F-type ATPases have 2 components, CF(1) - the catalytic core - and CF(0) - the membrane proton channel. CF(1) has five subunits: alpha(3), beta(3), gamma(1), delta(1), epsilon(1). CF(0) has three main subunits: a(1), b(2) and c(9-12). The alpha and beta chains form an alternating ring which encloses part of the gamma chain. CF(1) is attached to CF(0) by a central stalk formed by the gamma and epsilon chains, while a peripheral stalk is formed by the delta and b chains.

The protein resides in the cell inner membrane. In terms of biological role, key component of the proton channel; it plays a direct role in the translocation of protons across the membrane. This Aliivibrio fischeri (strain ATCC 700601 / ES114) (Vibrio fischeri) protein is ATP synthase subunit a.